An 813-amino-acid polypeptide reads, in one-letter code: LPS-assembly protein LptD (813 aa).

The interval Met-1 to Gly-29 is disordered. Positions Met-1–Ala-52 are cleaved as a signal peptide.

It belongs to the LptD family. Component of the lipopolysaccharide transport and assembly complex. Interacts with LptE and LptA.

Its subcellular location is the cell outer membrane. Functionally, together with LptE, is involved in the assembly of lipopolysaccharide (LPS) at the surface of the outer membrane. The chain is LPS-assembly protein LptD from Cupriavidus necator (strain ATCC 17699 / DSM 428 / KCTC 22496 / NCIMB 10442 / H16 / Stanier 337) (Ralstonia eutropha).